We begin with the raw amino-acid sequence, 573 residues long: Sulfite reductase [NADPH] hemoprotein beta-component (573 aa).

Residues C438, C444, C483, and C487 each coordinate [4Fe-4S] cluster. Position 487 (C487) interacts with siroheme.

It belongs to the nitrite and sulfite reductase 4Fe-4S domain family. Alpha(8)-beta(8). The alpha component is a flavoprotein, the beta component is a hemoprotein. The cofactor is siroheme. Requires [4Fe-4S] cluster as cofactor.

The enzyme catalyses hydrogen sulfide + 3 NADP(+) + 3 H2O = sulfite + 3 NADPH + 4 H(+). It participates in sulfur metabolism; hydrogen sulfide biosynthesis; hydrogen sulfide from sulfite (NADPH route): step 1/1. Functionally, component of the sulfite reductase complex that catalyzes the 6-electron reduction of sulfite to sulfide. This is one of several activities required for the biosynthesis of L-cysteine from sulfate. This is Sulfite reductase [NADPH] hemoprotein beta-component from Nitrosomonas europaea (strain ATCC 19718 / CIP 103999 / KCTC 2705 / NBRC 14298).